Here is a 275-residue protein sequence, read N- to C-terminus: Calcium-binding protein 4 (275 aa).

Positions 1 to 12 are enriched in polar residues; the sequence is MTTEQARGQQGP. A disordered region spans residues 1-112; sequence MTTEQARGQQ…SLHDAAQRTY (112 aa). A compositionally biased stretch (basic residues) spans 38-55; that stretch reads TRKRSKKERGLRGSRKRT. Ser42 carries the phosphoserine modification. EF-hand domains lie at 129–164, 183–200, 206–241, and 243–275; these read EELDELQAAFEEFDTDRDGYISHRELGDCMRTLGYM, GRVDFEEFVELIGPKLRE, LGVRELRIAFREFDRDRDGRITVAELREAVPALLGE, and LAGPELDEMLREVDLNGDGTVDFDEFVMMLSRH. The Ca(2+) site is built by Asp142, Asp144, Asp146, Tyr148, and Glu153. 10 residues coordinate Ca(2+): Asp219, Asp221, Asp223, Arg225, Glu230, Asp256, Asn258, Asp260, Thr262, and Glu267.

In terms of assembly, interacts with CACNA1F and CACNA1D (via IQ domain) in a calcium independent manner. Interacts (via N-terminus) with UNC119. Phosphorylated. Phosphorylation levels change with the light conditions and regulate the activity. Expressed in retina and in the inner hair cells (IHC) of the cochlea.

The protein resides in the cytoplasm. It localises to the presynapse. Involved in normal synaptic function through regulation of Ca(2+) influx and neurotransmitter release in photoreceptor synaptic terminals and in auditory transmission. Modulator of CACNA1D and CACNA1F, suppressing the calcium-dependent inactivation and shifting the activation range to more hyperpolarized voltages. The sequence is that of Calcium-binding protein 4 (CABP4) from Homo sapiens (Human).